We begin with the raw amino-acid sequence, 230 residues long: Uracil-DNA glycosylase (230 aa).

The Proton acceptor role is filled by aspartate 70.

This sequence belongs to the uracil-DNA glycosylase (UDG) superfamily. UNG family.

The protein localises to the cytoplasm. The enzyme catalyses Hydrolyzes single-stranded DNA or mismatched double-stranded DNA and polynucleotides, releasing free uracil.. Its function is as follows. Excises uracil residues from the DNA which can arise as a result of misincorporation of dUMP residues by DNA polymerase or due to deamination of cytosine. In Pseudomonas fluorescens (strain ATCC BAA-477 / NRRL B-23932 / Pf-5), this protein is Uracil-DNA glycosylase.